We begin with the raw amino-acid sequence, 3750 residues long: Cubilin homolog (3750 aa).

A signal peptide spans 1–28 (MEGAARSRLLLCWTLLAIITDTWPIAEG). Asn51 and Asn123 each carry an N-linked (GlcNAc...) asparagine glycan. One can recognise an EGF-like 1 domain in the interval 154–190 (EANSCASGPCENGGTCYNTYTGFRCQCRSAFEGTKCE). 6 disulfides stabilise this stretch: Cys158-Cys169, Cys163-Cys178, Cys180-Cys189, Cys196-Cys212, Cys206-Cys221, and Cys223-Cys232. The EGF-like 2; calcium-binding domain occupies 192-233 (DVNECALYEGTDLGCQNGGQCQNHFGTYSCLCQPGWHGMHCT). The EGF-like 3; calcium-binding domain occupies 282–308 (DVDECSDSAAHKPCSTSCINLPGSFTC). An EGF-like 4; calcium-binding domain is found at 324–352 (DLDECQTNNGGCSLSPKVDCINTYGSYHC). Residue Asn424 is glycosylated (N-linked (GlcNAc...) asparagine). EGF-like domains follow at residues 426–463 (TTTN…PICE) and 465–503 (QPSP…RLCE). 7 cysteine pairs are disulfide-bonded: Cys430–Cys441, Cys435–Cys451, Cys453–Cys462, Cys469–Cys480, Cys474–Cys491, Cys493–Cys502, and Cys509–Cys535. Residue Asn448 is glycosylated (N-linked (GlcNAc...) asparagine). CUB domains are found at residues 509-623 (CNGM…WNSM), 627-738 (CGGR…YSVE), 744-852 (CGGV…YRMA), 853-971 (CDYK…YRAL), 978-1095 (CGGV…YTFE), 1100-1212 (CGGH…WRIF), 1216-1331 (CGGS…YKAN), 1332-1434 (CIRN…QLDY), 1439-1550 (CMEE…YRTV), 1554-1670 (CGGK…FHES), 1671-1788 (CGQT…YMTM), 1792-1902 (CGSI…YNYE), and 1903-2001 (HHNE…WNRL). Residues Asn542 and Asn548 are each glycosylated (N-linked (GlcNAc...) asparagine). Cys562 and Cys584 are oxidised to a cystine. Asn609 carries an N-linked (GlcNAc...) asparagine glycan. Intrachain disulfides connect Cys627–Cys654, Cys681–Cys701, Cys744–Cys770, Cys853–Cys879, Cys913–Cys933, and Cys978–Cys1004. N-linked (GlcNAc...) asparagine glycosylation is present at Asn871. Ca(2+) is bound by residues Glu1026, Asp1034, and Asp1080. A disulfide bridge connects residues Cys1031 and Cys1058. Cys1100 and Cys1126 are oxidised to a cystine. Asn1119 carries N-linked (GlcNAc...) asparagine glycosylation. Residue Glu1148 participates in Ca(2+) binding. Residue Asn1152 is glycosylated (N-linked (GlcNAc...) asparagine). Cys1153 and Cys1175 are oxidised to a cystine. Residues Asp1156 and Asp1197 each contribute to the Ca(2+) site. Cys1216 and Cys1242 are oxidised to a cystine. Ca(2+) contacts are provided by Glu1264, Asp1272, and Asp1316. Cysteines 1269 and 1292 form a disulfide. Cys1332 and Cys1360 are disulfide-bonded. N-linked (GlcNAc...) asparagine glycosylation is found at Asn1335, Asn1359, Asn1413, and Asn1424. A disulfide bridge connects residues Cys1439 and Cys1465. Residue Asn1491 is glycosylated (N-linked (GlcNAc...) asparagine). Disulfide bonds link Cys1492–Cys1513, Cys1554–Cys1580, Cys1607–Cys1631, Cys1671–Cys1697, Cys1733–Cys1755, Cys1792–Cys1818, and Cys1845–Cys1866. The N-linked (GlcNAc...) asparagine glycan is linked to Asn1694. Residues Asn1908 and Asn2009 are each glycosylated (N-linked (GlcNAc...) asparagine). Disulfide bonds link Cys2019/Cys2048 and Cys2077/Cys2100. 5 consecutive CUB domains span residues 2019-2139 (CGNQ…VRTA), 2140-2256 (CGSE…FRFE), 2262-2383 (DSGR…LSVA), 2385-2512 (CGGS…YTSL), and 2516-2646 (CGET…MNEV). N-linked (GlcNAc...) asparagine glycans are attached at residues Asn2092, Asn2128, Asn2152, and Asn2231. A disulfide bridge connects residues Cys2140 and Cys2167. An intrachain disulfide couples Cys2324 to Cys2346. A glycan (N-linked (GlcNAc...) asparagine) is linked at Asn2377. Residues Cys2385 and Cys2416 are joined by a disulfide bond. Asn2442 carries an N-linked (GlcNAc...) asparagine glycan. Cystine bridges form between Cys2445-Cys2474 and Cys2516-Cys2542. N-linked (GlcNAc...) asparagine glycans are attached at residues Asn2655, Asn2671, Asn2682, and Asn2772. 2 disulfide bridges follow: Cys2761/Cys2790 and Cys2837/Cys2859. 8 CUB domains span residues 2761-2895 (CGGV…IKYG), 2898-3010 (CGGK…FERN), 3011-3128 (CGGL…YTSR), 3130-3246 (CGGI…VRVM), 3249-3364 (CDEK…INAI), 3368-3512 (CGSS…VALN), 3522-3615 (LQGR…YLAS), and 3623-3736 (CGGQ…FAGV). Asn2885 and Asn2889 each carry an N-linked (GlcNAc...) asparagine glycan. 2 disulfide bridges follow: Cys2898–Cys2921 and Cys2949–Cys2973. N-linked (GlcNAc...) asparagine glycans are attached at residues Asn2960, Asn2965, and Asn2982. The cysteines at positions 3011 and 3039 are disulfide-linked. N-linked (GlcNAc...) asparagine glycosylation is found at Asn3040 and Asn3074. 2 disulfide bridges follow: Cys3070/Cys3092 and Cys3130/Cys3157. The N-linked (GlcNAc...) asparagine glycan is linked to Asn3160. 4 cysteine pairs are disulfide-bonded: Cys3184–Cys3207, Cys3249–Cys3278, Cys3305–Cys3327, and Cys3368–Cys3402. Asn3256 carries N-linked (GlcNAc...) asparagine glycosylation. Asn3427 carries N-linked (GlcNAc...) asparagine glycosylation. Cysteines 3430 and 3475 form a disulfide. 3 N-linked (GlcNAc...) asparagine glycosylation sites follow: Asn3543, Asn3572, and Asn3645. Disulfide bonds link Cys3560–Cys3579, Cys3623–Cys3649, and Cys3676–Cys3699.

In terms of tissue distribution, specifically expressed in nephrocytes.

Its subcellular location is the cell membrane. Functionally, required in the nephrocyte for normal uptake of proteins and elimination of toxins, and for maintenance of endocytic trafficking structures. May function together with Amnionless. In Drosophila melanogaster (Fruit fly), this protein is Cubilin homolog.